A 223-amino-acid chain; its full sequence is MSAQLLILSHMVLLQLIVAQLGPKIGKQFLKPKQCEITNQTVYDFQVQMLNGAQKSLAEYRNKVLLIVNVATYCAYTMQYRDFNPILESNSNGTLNILGFPCNQFYLQEPAENHELLSGLKYVRPGHGWEPHKNMHIFGKLEVNGENDHPLYKFLKERCPPTVPVIGKRHQLIYDPIGTNDVIWNFEKFLVDKKGRPRYRFHPENWVQGTAVKPYIDELEREI.

Residues 1–19 form the signal peptide; that stretch reads MSAQLLILSHMVLLQLIVA. Residue N39 is glycosylated (N-linked (GlcNAc...) asparagine). Residue C74 is part of the active site. Residue N92 is glycosylated (N-linked (GlcNAc...) asparagine).

This sequence belongs to the glutathione peroxidase family. Homotetramer.

It is found in the secreted. It carries out the reaction 2 glutathione + H2O2 = glutathione disulfide + 2 H2O. Could inhibit the oxidative burst of leukocytes and neutralize the secondary products of lipid peroxidation, thus providing the resistance of these parasites to immune effector mechanisms and their persistence in the mammalian host. It may also be involved in the formation of cross-linking residues such as dityrosine, trityrosine and isotrityrosine identified in cuticular collagen. Highly cross-linked external cortex may also serve to protect the parasite from immune attack. This Brugia malayi (Filarial nematode worm) protein is Cuticular glutathione peroxidase.